A 174-amino-acid chain; its full sequence is uncharacterized protein (174 aa).

Residues 137-174 (TNVTLGDDTPKSYDAPVSAIPPPATATTANATGVKPLE) are disordered.

This is an uncharacterized protein from Acanthamoeba polyphaga (Amoeba).